We begin with the raw amino-acid sequence, 342 residues long: Ferredoxin--NADP reductase (342 aa).

Residues C17, D36, Q44, Y49, V89, F124, D289, and T330 each coordinate FAD.

The protein belongs to the ferredoxin--NADP reductase type 2 family. Homodimer. Requires FAD as cofactor.

It catalyses the reaction 2 reduced [2Fe-2S]-[ferredoxin] + NADP(+) + H(+) = 2 oxidized [2Fe-2S]-[ferredoxin] + NADPH. This chain is Ferredoxin--NADP reductase, found in Nitrobacter winogradskyi (strain ATCC 25391 / DSM 10237 / CIP 104748 / NCIMB 11846 / Nb-255).